A 186-amino-acid chain; its full sequence is UPF0200 protein Mbar_A0975 (186 aa).

8–15 is an ATP binding site; that stretch reads GMPASGKS.

It belongs to the UPF0200 family.

The polypeptide is UPF0200 protein Mbar_A0975 (Methanosarcina barkeri (strain Fusaro / DSM 804)).